The primary structure comprises 235 residues: Aspartate/glutamate leucyltransferase (235 aa).

This sequence belongs to the R-transferase family. Bpt subfamily.

It localises to the cytoplasm. The catalysed reaction is N-terminal L-glutamyl-[protein] + L-leucyl-tRNA(Leu) = N-terminal L-leucyl-L-glutamyl-[protein] + tRNA(Leu) + H(+). It catalyses the reaction N-terminal L-aspartyl-[protein] + L-leucyl-tRNA(Leu) = N-terminal L-leucyl-L-aspartyl-[protein] + tRNA(Leu) + H(+). In terms of biological role, functions in the N-end rule pathway of protein degradation where it conjugates Leu from its aminoacyl-tRNA to the N-termini of proteins containing an N-terminal aspartate or glutamate. This Pseudomonas putida (strain GB-1) protein is Aspartate/glutamate leucyltransferase.